We begin with the raw amino-acid sequence, 238 residues long: Isoamyl acetate-hydrolyzing esterase (238 aa).

The active-site Nucleophile is the S12. D187 serves as the catalytic Proton donor. H190 functions as the Proton acceptor in the catalytic mechanism.

Belongs to the 'GDSL' lipolytic enzyme family. IAH1 subfamily. In terms of assembly, homodimer.

It carries out the reaction 3-methylbutyl acetate + H2O = 3-methylbutanol + acetate + H(+). Functionally, plays a crucial role in the hydrolysis of isoamyl acetate in sake mash. Hydrolyzes short chain esters from acetate (C2) to hexanoate (C6), showing more specificity for shorter chain exters. No activity for decanoate (C10) esters. The polypeptide is Isoamyl acetate-hydrolyzing esterase (Saccharomyces cerevisiae (strain ATCC 204508 / S288c) (Baker's yeast)).